The chain runs to 434 residues: Enolase A (434 aa).

Residues His-160 and Glu-169 each contribute to the substrate site. The active-site Proton donor is the Glu-212. Mg(2+)-binding residues include Asp-247, Glu-296, and Asp-321. Substrate contacts are provided by Glu-296 and Asp-321. The Proton acceptor role is filled by Lys-346. Substrate-binding positions include 373–376 (SHRS) and Lys-397.

This sequence belongs to the enolase family. In terms of assembly, homodimer. Mg(2+) is required as a cofactor.

The protein resides in the cytoplasm. The catalysed reaction is (2R)-2-phosphoglycerate = phosphoenolpyruvate + H2O. It functions in the pathway carbohydrate degradation; glycolysis; pyruvate from D-glyceraldehyde 3-phosphate: step 4/5. This Dictyostelium discoideum (Social amoeba) protein is Enolase A (enoA).